Here is a 1096-residue protein sequence, read N- to C-terminus: Protein EMBRYONIC FLOWER 1 (1096 aa).

Disordered regions lie at residues 155–189 (KARG…EKLN), 274–296 (KTSG…VRGR), 315–348 (GATS…KGKQ), 366–420 (ETSQ…KKPV), 563–612 (LSRV…DIPM), 629–651 (DKEE…KNAL), 1007–1032 (DKEK…KNSS), and 1070–1096 (FKKK…TQNA). Short sequence motifs (nuclear localization signal) lie at residues 170–177 (SRKLVSPE) and 281–288 (IRKEESAL). The span at 281–294 (IRKEESALKKESVR) shows a compositional bias: basic and acidic residues. Polar residues predominate over residues 315 to 337 (GATSENASKSCDSDQGNSESTDS). The segment at 337-617 (SGFDRTPFKG…DDIPMEIVEL (281 aa)) is DNA-binding. The span at 371–381 (GIKEHDADPSK) shows a compositional bias: basic and acidic residues. Positions 382–394 (RSTPAHSLFTGND) are enriched in polar residues. The segment covering 572–601 (SGADRKGKTVMVQEHHGAPRSQSHDRKETT) has biased composition (basic and acidic residues). A DNA-binding region spans residues 866–1096 (LDPRLRSTTP…KPVCPPTQNA (231 aa)). A compositionally biased stretch (polar residues) spans 1018-1032 (SCNNNASAGPVKNSS). The Nuclear localization signal 3 signature appears at 1071 to 1078 (KKKPAVCK).

In terms of assembly, interacts with MSI1. Expressed in mature embryo, root tips, cotyledons, leaves, stems, shoot apex, and flower clusters, with highest levels in flowers. The presence in the shoot apical meristem (SAM) is required to maintain vegetative development and prevent early flowering.

The protein localises to the nucleus. Its function is as follows. Transcription repressor that regulates phase transition during shoot, flower and seeds development. Controls leaves development, shoot architecture and flowering by delaying both the vegetative to reproductive transition and flower initiation. Participates in polycomb group (PcG) protein complex-mediated (including EMF2) silencing of the flower homeotic genes AGAMOUS (AG), PISTILLATA (PI), and APETALA3 (AP3), as well as of some regulatory genes such as ABSCISIC ACID INSENSITIVE3 (ABI3), LONG VEGETATIVE PHASE1 (LOV1), and FLOWERING LOCUS C (FLC) during vegetative development. Required for histone methylation or for maintaining a stable histone methylation (e.g. H3K27me3) pattern of repressed target genes (including genes involved in salt stress response and flower development); this repression is counteracted by ULT1. Can bind non specifically DNA (both double- and single-stranded) and RNA. The polypeptide is Protein EMBRYONIC FLOWER 1 (Arabidopsis thaliana (Mouse-ear cress)).